The primary structure comprises 109 residues: uncharacterized protein (109 aa).

Residues 1 to 25 form a disordered region; that stretch reads METKPNALTGTSLSSTSGQTTQKSI. Over residues 8–22 the composition is skewed to low complexity; sequence LTGTSLSSTSGQTTQ. The helical transmembrane segment at 42–62 threads the bilayer; it reads TFGLMAILNLALLLWTLLATL. The tract at residues 84-109 is disordered; sequence TTLQKNTPSAKNGLKNTTNKHSHEDM. Residues 91-102 show a composition bias toward polar residues; it reads PSAKNGLKNTTN.

The protein localises to the host membrane. This is an uncharacterized protein from Bdellovibrio phage phiMH2K (Bacteriophage phiMH2K).